A 476-amino-acid polypeptide reads, in one-letter code: Aspartyl/glutamyl-tRNA(Asn/Gln) amidotransferase subunit B (476 aa).

Belongs to the GatB/GatE family. GatB subfamily. In terms of assembly, heterotrimer of A, B and C subunits.

It catalyses the reaction L-glutamyl-tRNA(Gln) + L-glutamine + ATP + H2O = L-glutaminyl-tRNA(Gln) + L-glutamate + ADP + phosphate + H(+). The catalysed reaction is L-aspartyl-tRNA(Asn) + L-glutamine + ATP + H2O = L-asparaginyl-tRNA(Asn) + L-glutamate + ADP + phosphate + 2 H(+). In terms of biological role, allows the formation of correctly charged Asn-tRNA(Asn) or Gln-tRNA(Gln) through the transamidation of misacylated Asp-tRNA(Asn) or Glu-tRNA(Gln) in organisms which lack either or both of asparaginyl-tRNA or glutaminyl-tRNA synthetases. The reaction takes place in the presence of glutamine and ATP through an activated phospho-Asp-tRNA(Asn) or phospho-Glu-tRNA(Gln). This is Aspartyl/glutamyl-tRNA(Asn/Gln) amidotransferase subunit B from Nitratidesulfovibrio vulgaris (strain ATCC 29579 / DSM 644 / CCUG 34227 / NCIMB 8303 / VKM B-1760 / Hildenborough) (Desulfovibrio vulgaris).